A 37-amino-acid polypeptide reads, in one-letter code: Large ribosomal subunit protein bL36 (37 aa).

It belongs to the bacterial ribosomal protein bL36 family.

This chain is Large ribosomal subunit protein bL36, found in Variovorax paradoxus (strain S110).